The chain runs to 131 residues: Small ribosomal subunit protein uS8 (131 aa).

The protein belongs to the universal ribosomal protein uS8 family. In terms of assembly, part of the 30S ribosomal subunit. Contacts proteins S5 and S12.

In terms of biological role, one of the primary rRNA binding proteins, it binds directly to 16S rRNA central domain where it helps coordinate assembly of the platform of the 30S subunit. In Finegoldia magna (strain ATCC 29328 / DSM 20472 / WAL 2508) (Peptostreptococcus magnus), this protein is Small ribosomal subunit protein uS8.